We begin with the raw amino-acid sequence, 78 residues long: Large ribosomal subunit protein bL28 (78 aa).

Positions 1-22 (MSKVCQVTGKRPTTGNNVSHAN) are disordered. A compositionally biased stretch (polar residues) spans 11-22 (RPTTGNNVSHAN).

The protein belongs to the bacterial ribosomal protein bL28 family.

The polypeptide is Large ribosomal subunit protein bL28 (Alkalilimnicola ehrlichii (strain ATCC BAA-1101 / DSM 17681 / MLHE-1)).